The chain runs to 409 residues: Translation initiation factor 2 subunit gamma (409 aa).

Residues 7-203 form the tr-type G domain; that stretch reads QPEVNIGLVG…TIESEIPTPD (197 aa). A G1 region spans residues 16-23; that stretch reads GHVDHGKT. Positions 19, 23, 44, and 46 each coordinate Mg(2+). A GTP-binding site is contributed by 19 to 24; that stretch reads DHGKTT. Residues 44–48 are G2; sequence GISIR. Positions 90-93 are G3; that stretch reads DAPG. Residues 146 to 149 and 181 to 183 each bind GTP; these read NKID and SAQ. The segment at 146–149 is G4; it reads NKID. Positions 181–183 are G5; it reads SAQ.

It belongs to the TRAFAC class translation factor GTPase superfamily. Classic translation factor GTPase family. EIF2G subfamily. Heterotrimer composed of an alpha, a beta and a gamma chain. It depends on Mg(2+) as a cofactor.

It catalyses the reaction GTP + H2O = GDP + phosphate + H(+). Its function is as follows. eIF-2 functions in the early steps of protein synthesis by forming a ternary complex with GTP and initiator tRNA. The sequence is that of Translation initiation factor 2 subunit gamma from Natronomonas pharaonis (strain ATCC 35678 / DSM 2160 / CIP 103997 / JCM 8858 / NBRC 14720 / NCIMB 2260 / Gabara) (Halobacterium pharaonis).